The sequence spans 395 residues: MSLSLVSYRLRKNPWVNIFLPVLAIFLIYIIFFQRDQSLLGLNGQSISQHKWAHEKENTFYFPFTKKYKMPKYSYKKKSGWLFNDHVEDIIPEGHIAHYDLNKLHSTSEAAVNKEHILILTPMQTFHQQYWDNLLQLNYPRELIELGFITPRTATGDLALKKLENAIKKVQTDKKTQRFSKITILRQNSQSFDKLMEKERHALDVQKERRAAMALARNELLFSTIGPHTSWVLWLDADIIETPPSLIQDMTKHNKAILAANIYQRFYDEEKKQPSIRPYDFNNWQESDTGLEIASQMGDDEIIVEGYAEIATYRPLMAHFYDANGVPGEEMALDGVGGGCTLVKAEVHRDGAMFPNFPFYHLIETEGFAKMAKRLNYDVFGLPNYLVYHIEEENH.

Over 2-17 the chain is Cytoplasmic; the sequence is SLSLVSYRLRKNPWVN. Residues 18–33 traverse the membrane as a helical; Signal-anchor for type II membrane protein segment; sequence IFLPVLAIFLIYIIFF. At 34 to 395 the chain is on the lumenal side; the sequence is QRDQSLLGLN…LVYHIEEENH (362 aa).

This sequence belongs to the ANP1/MMN9/VAN1 family. In terms of assembly, the M-Pol I complex contains MNN9 and VAN1. The M-Pol II complex is composed of ANP1, MNN9, MNN10, MNN11 and HOC1.

Its subcellular location is the endoplasmic reticulum membrane. The protein resides in the golgi apparatus membrane. It participates in protein modification; protein glycosylation. The M-Pol I and M-Pol II complexes possess alpha-1,6-mannosyltransferase activity and are probably involved in the elongation of the mannan backbone of N-linked glycans on cell wall and periplasmic proteins. May also provide alpha-1,2-mannosyltransferase activity to the M-Pol I complex. The chain is Mannan polymerase complexes subunit MNN9 (MNN9) from Saccharomyces cerevisiae (strain ATCC 204508 / S288c) (Baker's yeast).